The following is a 302-amino-acid chain: Protoheme IX farnesyltransferase (302 aa).

9 helical membrane passes run 28-48 (LALLMLTMYGAYFAGGGSLDP), 50-70 (MLALLTIMGFTSIGGVTAFNM), 93-115 (LNPYEALAGSLALVIAGVLSAAA), 119-138 (YVALTVIAGLYFDIIAYTQL), 147-167 (IIFGSIAGSMPALGGWAAAAG), 172-192 (GGVLMALIVFLWQPMHVWFLG), 219-239 (LIAVSLAGLIAVAWAFALYYG), 242-262 (FLTAVITTVLAALAISRIGGF), and 271-291 (ALKLFKFASPIIAVVFIILPL).

It belongs to the UbiA prenyltransferase family. Protoheme IX farnesyltransferase subfamily.

It localises to the cell membrane. The catalysed reaction is heme b + (2E,6E)-farnesyl diphosphate + H2O = Fe(II)-heme o + diphosphate. It functions in the pathway porphyrin-containing compound metabolism; heme O biosynthesis; heme O from protoheme: step 1/1. Functionally, converts heme B (protoheme IX) to heme O by substitution of the vinyl group on carbon 2 of heme B porphyrin ring with a hydroxyethyl farnesyl side group. The protein is Protoheme IX farnesyltransferase of Aeropyrum pernix (strain ATCC 700893 / DSM 11879 / JCM 9820 / NBRC 100138 / K1).